The chain runs to 567 residues: tRNA (uracil-O(2)-)-methyltransferase (567 aa).

Phosphoserine is present on Ser-107.

This sequence belongs to the TRM44 family.

It localises to the cytoplasm. It carries out the reaction uridine(44) in tRNA(Ser) + S-adenosyl-L-methionine = 2'-O-methyluridine(44) in tRNA(Ser) + S-adenosyl-L-homocysteine + H(+). Functionally, tRNA (uracil-O(2)-)-methyltransferase, which catalyzes the formation of O(2)-methyluracil at position 44 (Um44) in tRNA(Ser). In Saccharomyces cerevisiae (strain ATCC 204508 / S288c) (Baker's yeast), this protein is tRNA (uracil-O(2)-)-methyltransferase (TRM44).